The sequence spans 125 residues: Large ribosomal subunit protein bL12 (125 aa).

It belongs to the bacterial ribosomal protein bL12 family. As to quaternary structure, homodimer. Part of the ribosomal stalk of the 50S ribosomal subunit. Forms a multimeric L10(L12)X complex, where L10 forms an elongated spine to which 2 to 4 L12 dimers bind in a sequential fashion. Binds GTP-bound translation factors.

Functionally, forms part of the ribosomal stalk which helps the ribosome interact with GTP-bound translation factors. Is thus essential for accurate translation. The sequence is that of Large ribosomal subunit protein bL12 from Afipia carboxidovorans (strain ATCC 49405 / DSM 1227 / KCTC 32145 / OM5) (Oligotropha carboxidovorans).